The sequence spans 182 residues: MAAEEKDPLSYFAAYGSSSSGSSDEEDNSEPEETSRKGQDTAKSAGGYGNKAEKRLPGPDELFRSVTRPAFLYNPLNKQIDWERHVVKAPEEPPKEFKIWKSHYVPPPETYSTEKKPPPPELDMAIKWSNIYEDNGDDAPQNAKKARLLPEGEETVESDDEKDEHTSKKRKIELGEPTKKKK.

The tract at residues 1-61 is disordered; the sequence is MAAEEKDPLS…AEKRLPGPDE (61 aa). A compositionally biased stretch (acidic residues) spans 23–32; sequence SDEEDNSEPE. Positions 51 to 61 are enriched in basic and acidic residues; it reads KAEKRLPGPDE. Residue threonine 67 is modified to Phosphothreonine. The residue at position 132 (tyrosine 132) is a Phosphotyrosine. The tract at residues 132–182 is disordered; it reads YEDNGDDAPQNAKKARLLPEGEETVESDDEKDEHTSKKRKIELGEPTKKKK. Positions 151-162 are enriched in acidic residues; the sequence is EGEETVESDDEK. Position 158 is a phosphoserine (serine 158). Residues 172–182 show a composition bias toward basic and acidic residues; sequence IELGEPTKKKK.

It belongs to the UPF0690 family.

The sequence is that of UPF0690 protein C1orf52 homolog from Bos taurus (Bovine).